The primary structure comprises 31 residues: Dermaseptin-DI3 (31 aa).

It belongs to the frog skin active peptide (FSAP) family. Dermaseptin subfamily. In terms of tissue distribution, expressed by the skin glands.

Its subcellular location is the secreted. In terms of biological role, antibacterial activity against Gram-positive bacteria S.aureus and E.faecalis, and Gram-negative bacteria P.aeruginosa and E.coli. The sequence is that of Dermaseptin-DI3 from Phyllomedusa distincta (Monkey frog).